The sequence spans 1271 residues: MVDPVGFAEAWKAQFPDSEPPRMELRSVGDIEQELERCKASIRRLEQEVNQERFRMIYLQTLLAKEKKSYDRQRWGFRRAAQAPDGASEPRASASRPQPAPADGADPPPAEEPEARPDGEGSPGKARPGTARRPGAAASGERDDRGPPASVAALRSNFERIRKGHGQPGADAEKPFYVNVEFHHERGLVKVNDKEVSDRISSLGSQAMQMERKKSQHGAGSSVGDASRPPYRGRSSESSCGVDGDYEDAELNPRFLKDNLIDANGGSRPPWPPLEYQPYQSIYVGGMMEGEGKGPLLRSQSTSEQEKRLTWPRRSYSPRSFEDCGGGYTPDCSSNENLTSSEEDFSSGQSSRVSPSPTTYRMFRDKSRSPSQNSQQSFDSSSPPTPQCHKRHRHCPVVVSEATIVGVRKTGQIWPNDGEGAFHGDADGSFGTPPGYGCAADRAEEQRRHQDGLPYIDDSPSSSPHLSSKGRGSRDALVSGALESTKASELDLEKGLEMRKWVLSGILASEETYLSHLEALLLPMKPLKAAATTSQPVLTSQQIETIFFKVPELYEIHKEFYDGLFPRVQQWSHQQRVGDLFQKLASQLGVYRAFVDNYGVAMEMAEKCCQANAQFAEISENLRARSNKDAKDPTTKNSLETLLYKPVDRVTRSTLVLHDLLKHTPASHPDHPLLQDALRISQNFLSSINEEITPRRQSMTVKKGEHRQLLKDSFMVELVEGARKLRHVFLFTDLLLCTKLKKQSGGKTQQYDCKWYIPLTDLSFQMVDELEAVPNIPLVPDEELDALKIKISQIKNDIQREKRANKGSKATERLKKKLSEQESLLLLMSPSMAFRVHSRNGKSYTFLISSDYERAEWRENIREQQKKCFRSFSLTSVELQMLTNSCVKLQTVHSIPLTINKEDDESPGLYGFLNVIVHSATGFKQSSNLYCTLEVDSFGYFVNKAKTRVYRDTAEPNWNEEFEIELEGSQTLRILCYEKCYNKTKIPKEDGESTDRLMGKGQVQLDPQALQDRDWQRTVIAMNGIEVKLSVKFNSREFSLKRMPSRKQTGVFGVKIAVVTKRERSKVPYIVRQCVEEIERRGMEEVGIYRVSGVATDIQALKAAFDVNNKDVSVMMSEMDVNAIAGTLKLYFRELPEPLFTDEFYPNFAEGIALSDPVAKESCMLNLLLSLPEANLLTFLFLLDHLKRVAEKEAVNKMSLHNLATVFGPTLLRPSEKESKLPANPSQPITMTDSWSLEVMSQVQVLLYFLQLEAIPAPDSKRQSILFSTEV.

Met1 bears the N-acetylmethionine mark. Residues Met1–Ala426 form a kinase region. Residues Val28–Arg55 are a coiled coil. The tract at residues Lys67–Glu173 is disordered. A compositionally biased stretch (low complexity) spans Ala87–Ala105. Ser122 carries the phosphoserine modification. The span at Pro123 to Ala138 shows a compositional bias: low complexity. Ser139 bears the Phosphoserine mark. Tyr177 bears the Phosphotyrosine; by HCK mark. The span at Glu185–Asp198 shows a compositional bias: basic and acidic residues. Disordered stretches follow at residues Glu185–Glu247, Gly286–His392, and Asn416–Ala476. Residues Ser197–Thr385 form a binding to ABL SH2-domain region. Positions Arg199–Met208 are enriched in polar residues. A phosphoserine mark is found at Ser202, Ser215, Ser222, and Ser236. At Tyr246 the chain carries Phosphotyrosine; by FES. Composition is skewed to low complexity over residues Ser346–Ser356 and Ser369–Ser382. Phosphoserine is present on residues Ser356, Ser377, and Ser382. At Thr385 the chain carries Phosphothreonine. Residues Asp441–Asp451 are compositionally biased toward basic and acidic residues. 2 positions are modified to phosphoserine: Ser459 and Ser463. Arg471 bears the Omega-N-methylarginine mark. A phosphoserine mark is found at Ser473 and Ser488. A DH domain is found at Met498–Glu691. Residue Tyr554 is modified to Phosphotyrosine. A Phosphothreonine modification is found at Thr641. Tyr644 is subject to Phosphotyrosine. Thr693 carries the post-translational modification Phosphothreonine. The PH domain occupies Gln708–Lys866. Residues His893–Ile1020 enclose the C2 domain. Ser894 is subject to Phosphoserine. One can recognise a Rho-GAP domain in the interval Val1054 to Tyr1248. Ser1264 is modified (phosphoserine).

As to quaternary structure, homotetramer. Interacts with PDZK1. May interact with CCPG1. Interacts with FES/FPS, ABL1, PIK3R1 and GRB2. Interacts with HCK. Interacts with SH2D5. Interacts with DLG4. Post-translationally, autophosphorylated. Phosphorylated by FES/FPS on tyrosine residues, leading to down-regulation of the BCR kinase activity. Phosphorylation at Tyr-177 by HCK is important for interaction with GRB2.

The protein resides in the postsynaptic density. It localises to the cell projection. The protein localises to the dendritic spine. Its subcellular location is the axon. It is found in the synapse. The enzyme catalyses L-seryl-[protein] + ATP = O-phospho-L-seryl-[protein] + ADP + H(+). It catalyses the reaction L-threonyl-[protein] + ATP = O-phospho-L-threonyl-[protein] + ADP + H(+). In terms of biological role, protein with a unique structure having two opposing regulatory activities toward small GTP-binding proteins. The C-terminus is a GTPase-activating protein (GAP) domain which stimulates GTP hydrolysis by RAC1, RAC2 and CDC42. Accelerates the intrinsic rate of GTP hydrolysis of RAC1 or CDC42, leading to down-regulation of the active GTP-bound form. The central Dbl homology (DH) domain functions as guanine nucleotide exchange factor (GEF) that modulates the GTPases CDC42, RHOA and RAC1. Promotes the conversion of CDC42, RHOA and RAC1 from the GDP-bound to the GTP-bound form. The amino terminus contains an intrinsic kinase activity. Functions as an important negative regulator of neuronal RAC1 activity. Regulates macrophage functions such as CSF1-directed motility and phagocytosis through the modulation of RAC1 activity. Plays a major role as a RHOA GEF in keratinocytes being involved in focal adhesion formation and keratinocyte differentiation. The polypeptide is Breakpoint cluster region protein (Homo sapiens (Human)).